The following is a 52-amino-acid chain: Conotoxin Cal9.2b (52 aa).

Residues 1 to 6 constitute a propeptide that is removed on maturation; sequence KKGVTL. 3 cysteine pairs are disulfide-bonded: Cys-14–Cys-31, Cys-19–Cys-41, and Cys-21–Cys-46.

Expressed by the venom duct.

It localises to the secreted. In terms of biological role, probable neurotoxin with unknown target. Possibly targets ion channels. This chain is Conotoxin Cal9.2b, found in Californiconus californicus (California cone).